The following is a 204-amino-acid chain: Cytochrome c biogenesis ATP-binding export protein CcmA (204 aa).

Residues 2-203 (LEADNLECVR…PAGTVRELRL (202 aa)) enclose the ABC transporter domain. Position 34–41 (34–41 (GRNGAGKT)) interacts with ATP.

Belongs to the ABC transporter superfamily. CcmA exporter (TC 3.A.1.107) family. As to quaternary structure, the complex is composed of two ATP-binding proteins (CcmA) and two transmembrane proteins (CcmB).

It is found in the cell inner membrane. It carries out the reaction heme b(in) + ATP + H2O = heme b(out) + ADP + phosphate + H(+). Part of the ABC transporter complex CcmAB involved in the biogenesis of c-type cytochromes; once thought to export heme, this seems not to be the case, but its exact role is uncertain. Responsible for energy coupling to the transport system. This is Cytochrome c biogenesis ATP-binding export protein CcmA from Dechloromonas aromatica (strain RCB).